A 345-amino-acid polypeptide reads, in one-letter code: Ferrochelatase (345 aa).

Fe cation-binding residues include His199 and Glu302.

Belongs to the ferrochelatase family.

Its subcellular location is the cytoplasm. It carries out the reaction heme b + 2 H(+) = protoporphyrin IX + Fe(2+). It participates in porphyrin-containing compound metabolism; protoheme biosynthesis; protoheme from protoporphyrin-IX: step 1/1. Its function is as follows. Catalyzes the ferrous insertion into protoporphyrin IX. This Porphyromonas gingivalis (strain ATCC 33277 / DSM 20709 / CIP 103683 / JCM 12257 / NCTC 11834 / 2561) protein is Ferrochelatase.